The primary structure comprises 183 residues: Small ribosomal subunit protein bS16 (183 aa).

The segment covering 149-161 (EKKAAEAAAKAEA) has biased composition (basic and acidic residues). The segment at 149-183 (EKKAAEAAAKAEAEAANAPAEEAPAAEATEAPAEA) is disordered. Positions 162-183 (EAANAPAEEAPAAEATEAPAEA) are enriched in low complexity.

Belongs to the bacterial ribosomal protein bS16 family.

The protein is Small ribosomal subunit protein bS16 of Phocaeicola vulgatus (strain ATCC 8482 / DSM 1447 / JCM 5826 / CCUG 4940 / NBRC 14291 / NCTC 11154) (Bacteroides vulgatus).